A 336-amino-acid polypeptide reads, in one-letter code: Glyceraldehyde-3-phosphate dehydrogenase (336 aa).

NAD(+) contacts are provided by residues 12 to 13 (RI), Asp-35, Arg-79, and Ser-121. D-glyceraldehyde 3-phosphate contacts are provided by residues 152–154 (SCT) and Thr-183. Cys-153 serves as the catalytic Nucleophile. Position 184 (Asn-184) interacts with NAD(+). D-glyceraldehyde 3-phosphate is bound by residues Arg-198, 211-212 (TG), and Arg-234. An NAD(+)-binding site is contributed by Asn-317.

Belongs to the glyceraldehyde-3-phosphate dehydrogenase family. As to quaternary structure, homotetramer.

The protein resides in the cytoplasm. It carries out the reaction D-glyceraldehyde 3-phosphate + phosphate + NAD(+) = (2R)-3-phospho-glyceroyl phosphate + NADH + H(+). The protein operates within carbohydrate degradation; glycolysis; pyruvate from D-glyceraldehyde 3-phosphate: step 1/5. With respect to regulation, resistant to pentalenolactone. In terms of biological role, catalyzes the oxidative phosphorylation of glyceraldehyde 3-phosphate (G3P) to 1,3-bisphosphoglycerate (BPG) using the cofactor NAD. The first reaction step involves the formation of a hemiacetal intermediate between G3P and a cysteine residue, and this hemiacetal intermediate is then oxidized to a thioester, with concomitant reduction of NAD to NADH. The reduced NADH is then exchanged with the second NAD, and the thioester is attacked by a nucleophilic inorganic phosphate to produce BPG. The sequence is that of Glyceraldehyde-3-phosphate dehydrogenase (gap) from Streptomyces coelicolor (strain ATCC BAA-471 / A3(2) / M145).